Consider the following 325-residue polypeptide: Casein kinase I isoform alpha (325 aa).

Alanine 2 carries the post-translational modification N-acetylalanine. The residue at position 4 (serine 4) is a Phosphoserine. Lysine 8 is modified (N6-acetyllysine). The Protein kinase domain maps to 17 to 285 (YKLVRKIGSG…YLRQLFRILF (269 aa)). Residues 23 to 31 (IGSGSFGDI) and lysine 46 contribute to the ATP site. The active-site Proton acceptor is the aspartate 136.

It belongs to the protein kinase superfamily. CK1 Ser/Thr protein kinase family. Casein kinase I subfamily. In terms of assembly, interacts with the Axin complex. Interacts with TUT1, leading to TUT1 phosphorylation. Interacts with FAM83A, FAM83B, FAM83C, FAM83D, FAM83E, FAM83F, FAM83G and FAM83H (via DUF1669). Interaction with FAM83H recruits CSNK1A1 to keratin filaments. Phosphorylated by MTOR in response to mitogenic stimulation, leading to its activation.

The protein localises to the cytoplasm. It localises to the cytoskeleton. Its subcellular location is the microtubule organizing center. It is found in the centrosome. The protein resides in the chromosome. The protein localises to the centromere. It localises to the kinetochore. Its subcellular location is the nucleus speckle. It is found in the cilium basal body. The protein resides in the spindle. It carries out the reaction L-seryl-[protein] + ATP = O-phospho-L-seryl-[protein] + ADP + H(+). The catalysed reaction is L-threonyl-[protein] + ATP = O-phospho-L-threonyl-[protein] + ADP + H(+). Functionally, casein kinases are operationally defined by their preferential utilization of acidic proteins such as caseins as substrates. Can phosphorylate a large number of proteins. Participates in Wnt signaling. Phosphorylates CTNNB1 at 'Ser-45'. May phosphorylate PER1 and PER2. May play a role in segregating chromosomes during mitosis. May play a role in keratin cytoskeleton disassembly and thereby, it may regulate epithelial cell migration. Acts as a positive regulator of mTORC1 and mTORC2 signaling in response to nutrients by mediating phosphorylation of DEPTOR inhibitor. Acts as an inhibitor of NLRP3 inflammasome assembly by mediating phosphorylation of NLRP3. The protein is Casein kinase I isoform alpha (CSNK1A1) of Oryctolagus cuniculus (Rabbit).